Here is a 147-residue protein sequence, read N- to C-terminus: Hemoglobin subunit epsilon (147 aa).

The Globin domain occupies 3-147; that stretch reads HLTAEEKAAI…VAIALGHKYH (145 aa). Ser-14 and Ser-51 each carry phosphoserine. His-64 and His-93 together coordinate heme b.

The protein belongs to the globin family. Heterotetramer of two alpha chains and two epsilon chains in early embryonic hemoglobin Gower-2; two zeta chains and two epsilon chains in early embryonic hemoglobin Gower-1. Red blood cells.

Its function is as follows. The epsilon chain is a beta-type chain of early mammalian embryonic hemoglobin. The chain is Hemoglobin subunit epsilon (HBE1) from Ateles belzebuth (White-bellied spider monkey).